A 951-amino-acid chain; its full sequence is Sodium/potassium exporting P-type ATPase 1 (951 aa).

The Cytoplasmic segment spans residues methionine 1 to valine 57. Residues leucine 58–phenylalanine 78 form a helical membrane-spanning segment. Residues alanine 79–aspartate 82 are Extracellular-facing. A helical membrane pass occupies residues histidine 83–glutamine 103. Over glutamate 104–methionine 247 the chain is Cytoplasmic. A helical transmembrane segment spans residues alanine 248–phenylalanine 268. Over glutamate 269 to aspartate 273 the chain is Extracellular. Residues isoleucine 274–isoleucine 294 traverse the membrane as a helical segment. Topologically, residues threonine 295 to lysine 717 are cytoplasmic. The 4-aspartylphosphate intermediate role is filled by aspartate 330. Mg(2+) is bound by residues aspartate 330 and threonine 332. ATP contacts are provided by threonine 332, glutamate 414, lysine 467, arginine 511, threonine 575, glycine 576, aspartate 577, arginine 636, and lysine 642. Aspartate 661 lines the Mg(2+) pocket. Residue asparagine 664 coordinates ATP. Residues phenylalanine 718–alanine 738 traverse the membrane as a helical segment. Residues phenylalanine 739–asparagine 743 are Extracellular-facing. A helical membrane pass occupies residues glycine 744–threonine 764. The Cytoplasmic portion of the chain corresponds to proline 765–methionine 799. The chain crosses the membrane as a helical span at residues valine 800–phenylalanine 820. Over glycine 821–threonine 840 the chain is Extracellular. The helical transmembrane segment at valine 841–tyrosine 861 threads the bilayer. At asparagine 862 to arginine 885 the chain is on the cytoplasmic side. A helical membrane pass occupies residues leucine 886–threonine 906. Residues leucine 907–threonine 916 are Extracellular-facing. The helical transmembrane segment at isoleucine 917 to leucine 937 threads the bilayer. Over tyrosine 938–isoleucine 951 the chain is Cytoplasmic.

It belongs to the cation transport ATPase (P-type) (TC 3.A.3) family. Type IID subfamily. Mg(2+) is required as a cofactor. Post-translationally, the active site is phosphorylated in presence of sodium or potassium and in conditions of higher pH. Not phosphorylated in presence of calcium ions.

It localises to the cell membrane. It carries out the reaction Na(+)(in) + ATP + H2O = Na(+)(out) + ADP + phosphate + H(+). It catalyses the reaction K(+)(in) + ATP + H2O = K(+)(out) + ADP + phosphate + H(+). Catalyzes the hydrolysis of ATP coupled with the export of sodium and potassium from the cell. Appears to export potassium more efficiently than sodium. May transport other cations such as lithium. Sodium/potassium efflux ATPases are involved in salt tolerance and maintaining the membrane potential across the plasma membrane in high salinity (Na+) or alkaline (K+) environments. This chain is Sodium/potassium exporting P-type ATPase 1, found in Marchantia polymorpha (Common liverwort).